Here is a 186-residue protein sequence, read N- to C-terminus: uncharacterized protein (186 aa).

Belongs to the geranylgeranyl reductase family. ChlP subfamily.

This is an uncharacterized protein from Methanosarcina barkeri.